Here is a 408-residue protein sequence, read N- to C-terminus: Argininosuccinate synthase (408 aa).

ATP-binding positions include 10-18 (AYSGGLDTS) and alanine 37. Positions 90 and 95 each coordinate L-citrulline. Glycine 120 is an ATP binding site. L-aspartate is bound by residues threonine 122, asparagine 126, and aspartate 127. Asparagine 126 contacts L-citrulline. L-citrulline contacts are provided by arginine 130, serine 182, serine 191, glutamate 267, and tyrosine 279.

It belongs to the argininosuccinate synthase family. Type 1 subfamily. Homotetramer.

Its subcellular location is the cytoplasm. It carries out the reaction L-citrulline + L-aspartate + ATP = 2-(N(omega)-L-arginino)succinate + AMP + diphosphate + H(+). It functions in the pathway amino-acid biosynthesis; L-arginine biosynthesis; L-arginine from L-ornithine and carbamoyl phosphate: step 2/3. The protein is Argininosuccinate synthase of Paraburkholderia phytofirmans (strain DSM 17436 / LMG 22146 / PsJN) (Burkholderia phytofirmans).